Here is a 578-residue protein sequence, read N- to C-terminus: Protein O-linked-mannose beta-1,4-N-acetylglucosaminyltransferase 2 (578 aa).

Over 1–4 the chain is Cytoplasmic; the sequence is MNIS. Residues 5 to 25 traverse the membrane as a helical; Signal-anchor for type II membrane protein segment; sequence AVFSALLVSIMAAVLWKHVKL. At 26–578 the chain is on the lumenal side; sequence LDQFYVIEEE…PFAEVLVCST (553 aa). N-linked (GlcNAc...) asparagine glycosylation is found at N98, N275, N335, N451, N541, and N563. The region spanning 484 to 578 is the Fibronectin type-III domain; the sequence is RESKCQASAQ…PFAEVLVCST (95 aa).

It belongs to the glycosyltransferase 61 family.

The protein resides in the endoplasmic reticulum membrane. The enzyme catalyses 3-O-(alpha-D-mannosyl)-L-threonyl-[protein] + UDP-N-acetyl-alpha-D-glucosamine = 3-O-(N-acetyl-beta-D-glucosaminyl-(1-&gt;4)-alpha-D-mannosyl)-L-threonyl-[protein] + UDP + H(+). The protein operates within protein modification; protein glycosylation. In terms of biological role, O-linked mannose beta-1,4-N-acetylglucosaminyltransferase that transfers UDP-N-acetyl-D-glucosamine to the 4-position of the mannose to generate N-acetyl-D-glucosamine-beta-1,4-O-D-mannosylprotein. Involved in the biosynthesis of the phosphorylated O-mannosyl trisaccharide (N-acetylgalactosamine-beta-3-N-acetylglucosamine-beta-4-(phosphate-6-)mannose), a carbohydrate structure present in alpha-dystroglycan (DAG1), which is required for binding laminin G-like domain-containing extracellular proteins with high affinity. This Xenopus laevis (African clawed frog) protein is Protein O-linked-mannose beta-1,4-N-acetylglucosaminyltransferase 2 (pomgnt2).